We begin with the raw amino-acid sequence, 376 residues long: Fibromodulin (376 aa).

An N-terminal signal peptide occupies residues 1–18; that stretch reads MQWASILLLRGLCSLSQG. Pyrrolidone carboxylic acid is present on Q19. Residues Y20, Y38, Y53, Y55, Y63, and Y65 each carry the sulfotyrosine modification. Residues 67–105 enclose the LRRNT domain; the sequence is APPPPEPRDCPQECDCPPNFPTAMYCDNRNLKYLPFVPS. LRR repeat units lie at residues 106–127, 130–143, 156–176, 177–198, 201–222, 224–245, 246–266, and 269–289; these read RMKY…VFDN, GLLW…QITS, HLER…PLPR, SLRE…ALEG, NLTA…MRGL, SLIL…LPSA, LEQL…YFRG, and KLLY…ATNT. N127 carries N-linked (GlcNAc...) (keratan sulfate) asparagine glycosylation. N-linked (GlcNAc...) (keratan sulfate) asparagine glycosylation occurs at N166. N201 is a glycosylation site (N-linked (GlcNAc...) (keratan sulfate) asparagine). N291 is a glycosylation site (N-linked (GlcNAc...) (keratan sulfate) asparagine). LRR repeat units follow at residues 294 to 315 and 316 to 335; these read SLLE…NTNL and ENLY…SFCT. An intrachain disulfide couples C334 to C367. A glycan (N-linked (GlcNAc...) asparagine) is linked at N341. The LRR 11 repeat unit spans residues 344-367; sequence KLQVLRLDGNEIKRSAMPVDAPLC.

This sequence belongs to the small leucine-rich proteoglycan (SLRP) family. SLRP class II subfamily. In terms of assembly, binds to type I and type II collagen. Binds keratan sulfate chains.

The protein localises to the secreted. It is found in the extracellular space. The protein resides in the extracellular matrix. Affects the rate of fibrils formation. May have a primary role in collagen fibrillogenesis. The chain is Fibromodulin (Fmod) from Rattus norvegicus (Rat).